Reading from the N-terminus, the 417-residue chain is Calreticulin (417 aa).

The signal sequence occupies residues 1–17 (MLLSVPLLLGLLGLAAA). The interval 18 to 197 (EPAVYFKEQF…NSQVESGSLE (180 aa)) is N-domain. Gln-26 serves as a coordination point for Ca(2+). At Lys-48 the chain carries N6-acetyllysine. Positions 62 and 64 each coordinate Ca(2+). An N6-(2-hydroxyisobutyryl)lysine modification is found at Lys-64. A disulfide bridge links Cys-105 with Cys-137. Tyr-109, Lys-111, Tyr-128, and Asp-135 together coordinate an alpha-D-glucoside. N6-acetyllysine is present on Lys-159. Residues 191-202 (VESGSLEDDWDF) form a 1-1 repeat. Residues 191–255 (VESGSLEDDW…DAKKPEDWDE (65 aa)) are 4 X approximate repeats. Residues 193 to 277 (SGSLEDDWDF…NPEYKGEWKP (85 aa)) form a disordered region. The P-domain stretch occupies residues 198–308 (DDWDFLPPKK…YSPDANIYAY (111 aa)). A compositionally biased stretch (basic and acidic residues) spans 207–251 (KIKDPDAAKPEDWDERAKIDDPTDSKPEDWDKPEHIPDPDAKKPE). Lys-209 bears the N6-acetyllysine mark. 6 tandem repeats follow at residues 210–221 (DPDAAKPEDWDE), 227–238 (DPTDSKPEDWDK), 244–255 (DPDAKKPEDWDE), 259–269 (GEWEPPVIQNP), 273–283 (GEWKPRQIDNP), and 287–297 (GTWIHPEIDNP). The interval 237-270 (DKPEHIPDPDAKKPEDWDEEMDGEWEPPVIQNPE) is interaction with PPIB. The span at 252 to 261 (DWDEEMDGEW) shows a compositional bias: acidic residues. Residues 259 to 297 (GEWEPPVIQNPEYKGEWKPRQIDNPDYKGTWIHPEIDNP) are 3 X approximate repeats. The tract at residues 309–417 (DSFAVLGLDL…TTPGQTKDEL (109 aa)) is C-domain. Asp-317 serves as a coordination point for an alpha-D-glucoside. Asp-328 is a Ca(2+) binding site. The tract at residues 350–417 (TKASEKQMKD…TTPGQTKDEL (68 aa)) is disordered. A compositionally biased stretch (basic and acidic residues) spans 352–379 (ASEKQMKDKQDEEQRLKEEEEDKKRKEE). Residues 380 to 408 (EEAEDKEDEDDRDEDEEDEDEKEEDEEDT) show a composition bias toward acidic residues. Residues 414-417 (KDEL) carry the Prevents secretion from ER motif.

Belongs to the calreticulin family. In terms of assembly, monomer. Component of an EIF2 complex at least composed of CELF1/CUGBP1, CALR, CALR3, EIF2S1, EIF2S2, HSP90B1 and HSPA5. Interacts with PDIA3/ERp57 and SPACA9. Interacts with TRIM21. Interacts with NR3C1. Interacts with PPIB. Interacts (via P-domain) with PDIA5. Interacts with GABARAP. Interacts with CLCC1.

Its subcellular location is the endoplasmic reticulum lumen. It localises to the cytoplasm. It is found in the cytosol. The protein resides in the cytolytic granule. The protein localises to the secreted. Its subcellular location is the extracellular space. It localises to the extracellular matrix. It is found in the cell surface. The protein resides in the sarcoplasmic reticulum lumen. The protein localises to the cytoplasmic vesicle. Its subcellular location is the secretory vesicle. It localises to the cortical granule. Calcium-binding chaperone that promotes folding, oligomeric assembly and quality control in the endoplasmic reticulum (ER) via the calreticulin/calnexin cycle. This lectin interacts transiently with almost all of the monoglucosylated glycoproteins that are synthesized in the ER. Interacts with the DNA-binding domain of NR3C1 and mediates its nuclear export. Involved in maternal gene expression regulation. May participate in oocyte maturation via the regulation of calcium homeostasis. Present in the cortical granules of non-activated oocytes, is exocytosed during the cortical reaction in response to oocyte activation and might participate in the block to polyspermy. The chain is Calreticulin (CALR) from Cricetulus griseus (Chinese hamster).